A 122-amino-acid chain; its full sequence is Large ribosomal subunit protein uL14 (122 aa).

This sequence belongs to the universal ribosomal protein uL14 family. As to quaternary structure, part of the 50S ribosomal subunit. Forms a cluster with proteins L3 and L19. In the 70S ribosome, L14 and L19 interact and together make contacts with the 16S rRNA in bridges B5 and B8.

In terms of biological role, binds to 23S rRNA. Forms part of two intersubunit bridges in the 70S ribosome. The protein is Large ribosomal subunit protein uL14 of Mycoplasmopsis agalactiae (strain NCTC 10123 / CIP 59.7 / PG2) (Mycoplasma agalactiae).